The following is a 458-amino-acid chain: UPF0210 protein MJ1665 (458 aa).

This sequence belongs to the UPF0210 family.

The chain is UPF0210 protein MJ1665 from Methanocaldococcus jannaschii (strain ATCC 43067 / DSM 2661 / JAL-1 / JCM 10045 / NBRC 100440) (Methanococcus jannaschii).